We begin with the raw amino-acid sequence, 174 residues long: Interleukin-1 receptor antagonist protein (174 aa).

Positions M1–C23 are cleaved as a signal peptide. The cysteines at positions 89 and 139 are disulfide-linked. The N-linked (GlcNAc...) asparagine glycan is linked to N107.

Belongs to the IL-1 family.

The protein localises to the secreted. Anti-inflammatory antagonist of interleukin-1 family of proinflammatory cytokines such as interleukin-1beta/IL1B and interleukin-1alpha/IL1A. Protects from immune dysregulation and uncontrolled systemic inflammation triggered by IL1 for a range of innate stimulatory agents such as pathogens. The protein is Interleukin-1 receptor antagonist protein (IL1RN) of Bos taurus (Bovine).